The chain runs to 543 residues: Chaperonin GroEL (543 aa).

ATP is bound by residues 31-34 (TMGP), 88-92 (DGTTT), Gly-415, 479-481 (DAL), and Asp-495.

This sequence belongs to the chaperonin (HSP60) family. As to quaternary structure, forms a cylinder of 14 subunits composed of two heptameric rings stacked back-to-back. Interacts with the co-chaperonin GroES.

It is found in the cytoplasm. It catalyses the reaction ATP + H2O + a folded polypeptide = ADP + phosphate + an unfolded polypeptide.. Together with its co-chaperonin GroES, plays an essential role in assisting protein folding. The GroEL-GroES system forms a nano-cage that allows encapsulation of the non-native substrate proteins and provides a physical environment optimized to promote and accelerate protein folding. This chain is Chaperonin GroEL, found in Clostridium tetani (strain Massachusetts / E88).